The primary structure comprises 557 residues: Acid-sensing ion channel 1B (557 aa).

Topologically, residues 1 to 98 (MVRITCTISF…SIRQGLWALV (98 aa)) are cytoplasmic. A compositionally biased stretch (basic and acidic residues) spans 36-45 (KDGEQGKYQE). The disordered stretch occupies residues 36 to 57 (KDGEQGKYQEEGDDPDAYDGPE). The span at 46 to 57 (EGDDPDAYDGPE) shows a compositional bias: acidic residues. A helical membrane pass occupies residues 99-115 (FLLAISMFLLQVVDRVI). Residues 116 to 460 (YYLQYDYVTL…ETIEQKKAYE (345 aa)) are Extracellular-facing. N-linked (GlcNAc...) asparagine glycans are attached at residues N133 and N194. Disulfide bonds link C142-C229, C207-C214, C325-C400, C343-C396, C347-C394, C356-C378, and C358-C370. Residues N401 and N428 are each glycosylated (N-linked (GlcNAc...) asparagine). Residues 461–491 (LAGLLGDIGGQMGLFIGASILTILELFDYLY) form a discontinuously helical membrane-spanning segment. Residues 477–479 (GAS) carry the GAS motif; ion selectivity filter motif. Residues 492–557 (EVIKFKLCRC…GQGNFEDFTC (66 aa)) lie on the Cytoplasmic side of the membrane.

Belongs to the amiloride-sensitive sodium channel (TC 1.A.6) family. ASIC1 subfamily. In terms of assembly, homotrimer. Heterotrimer; with other ASIC proteins producing channel with different properties. As to expression, expressed in central nervous system.

It is found in the cell membrane. It localises to the postsynaptic cell membrane. Its subcellular location is the cell projection. The protein resides in the dendrite. The catalysed reaction is Na(+)(in) = Na(+)(out). It catalyses the reaction K(+)(in) = K(+)(out). It carries out the reaction Li(+)(in) = Li(+)(out). The enzyme catalyses Ca(2+)(in) = Ca(2+)(out). Its activity is regulated as follows. Inhibited by the diuretic drug amiloride. Functionally, forms voltage-independent, pH-gated trimeric sodium channels that act as postsynaptic excitatory receptors in the nervous system, playing a crucial role in regulating synaptic plasticity, learning, and memory. Upon extracellular pH drop this channel elicits transient, fast activating, and completely desensitizing inward currents. Displays high selectivity for sodium ions but can also permit the permeation of other cations. The protein is Acid-sensing ion channel 1B (asic1b) of Danio rerio (Zebrafish).